The following is a 443-amino-acid chain: UDP-N-acetylmuramate--L-alanine ligase (443 aa).

Residue 110-116 (GAHGKTS) participates in ATP binding.

This sequence belongs to the MurCDEF family.

It localises to the cytoplasm. The catalysed reaction is UDP-N-acetyl-alpha-D-muramate + L-alanine + ATP = UDP-N-acetyl-alpha-D-muramoyl-L-alanine + ADP + phosphate + H(+). It functions in the pathway cell wall biogenesis; peptidoglycan biosynthesis. Its function is as follows. Cell wall formation. This Streptococcus equi subsp. equi (strain 4047) protein is UDP-N-acetylmuramate--L-alanine ligase.